Consider the following 172-residue polypeptide: Large ribosomal subunit protein uL10 (172 aa).

It belongs to the universal ribosomal protein uL10 family. In terms of assembly, part of the ribosomal stalk of the 50S ribosomal subunit. The N-terminus interacts with L11 and the large rRNA to form the base of the stalk. The C-terminus forms an elongated spine to which L12 dimers bind in a sequential fashion forming a multimeric L10(L12)X complex.

Functionally, forms part of the ribosomal stalk, playing a central role in the interaction of the ribosome with GTP-bound translation factors. The chain is Large ribosomal subunit protein uL10 from Rhizobium johnstonii (strain DSM 114642 / LMG 32736 / 3841) (Rhizobium leguminosarum bv. viciae).